Here is a 191-residue protein sequence, read N- to C-terminus: Acireductone dioxygenase 2 (191 aa).

Residues histidine 102, histidine 104, glutamate 108, and histidine 146 each contribute to the Fe(2+) site. Ni(2+) is bound by residues histidine 102, histidine 104, glutamate 108, and histidine 146.

It belongs to the acireductone dioxygenase (ARD) family. Monomer. The cofactor is Fe(2+). Ni(2+) serves as cofactor.

It carries out the reaction 1,2-dihydroxy-5-(methylsulfanyl)pent-1-en-3-one + O2 = 3-(methylsulfanyl)propanoate + CO + formate + 2 H(+). It catalyses the reaction 1,2-dihydroxy-5-(methylsulfanyl)pent-1-en-3-one + O2 = 4-methylsulfanyl-2-oxobutanoate + formate + 2 H(+). It participates in amino-acid biosynthesis; L-methionine biosynthesis via salvage pathway; L-methionine from S-methyl-5-thio-alpha-D-ribose 1-phosphate: step 5/6. Its function is as follows. Catalyzes 2 different reactions between oxygen and the acireductone 1,2-dihydroxy-3-keto-5-methylthiopentene (DHK-MTPene) depending upon the metal bound in the active site. Fe-containing acireductone dioxygenase (Fe-ARD) produces formate and 2-keto-4-methylthiobutyrate (KMTB), the alpha-ketoacid precursor of methionine in the methionine recycle pathway. Ni-containing acireductone dioxygenase (Ni-ARD) produces methylthiopropionate, carbon monoxide and formate, and does not lie on the methionine recycle pathway. This chain is Acireductone dioxygenase 2, found in Nocardia farcinica (strain IFM 10152).